Consider the following 249-residue polypeptide: tRNA (guanine-N(1)-)-methyltransferase (249 aa).

S-adenosyl-L-methionine-binding positions include Gly113 and 133-138; that span reads IGDFVL.

It belongs to the RNA methyltransferase TrmD family. As to quaternary structure, homodimer.

It localises to the cytoplasm. The catalysed reaction is guanosine(37) in tRNA + S-adenosyl-L-methionine = N(1)-methylguanosine(37) in tRNA + S-adenosyl-L-homocysteine + H(+). Functionally, specifically methylates guanosine-37 in various tRNAs. In Photobacterium profundum (strain SS9), this protein is tRNA (guanine-N(1)-)-methyltransferase.